Here is a 207-residue protein sequence, read N- to C-terminus: Large ribosomal subunit protein uL4 (207 aa).

The segment at 49–78 (HAVKNRSAVSGGGRKPWRQKGTGRARQGSI) is disordered.

The protein belongs to the universal ribosomal protein uL4 family. As to quaternary structure, part of the 50S ribosomal subunit.

In terms of biological role, one of the primary rRNA binding proteins, this protein initially binds near the 5'-end of the 23S rRNA. It is important during the early stages of 50S assembly. It makes multiple contacts with different domains of the 23S rRNA in the assembled 50S subunit and ribosome. Forms part of the polypeptide exit tunnel. This Streptococcus pyogenes serotype M49 (strain NZ131) protein is Large ribosomal subunit protein uL4.